We begin with the raw amino-acid sequence, 331 residues long: Cytoplasmic envelopment protein 1 (331 aa).

This sequence belongs to the herpesviridae cytoplasmic envelopment protein 1 family. As to quaternary structure, interacts with protein ORF7; this interaction localizes protein ORF53 to the host trans-Golgi network (TGN).

It localises to the virion. Its subcellular location is the virion tegument. It is found in the host cytoplasm. The protein resides in the host Golgi apparatus. In terms of biological role, plays a critical role in cytoplasmic virus egress. Participates in the final step of tegumentation and envelope acquisition within the host cytoplasm. This Varicella-zoster virus (strain Dumas) (HHV-3) protein is Cytoplasmic envelopment protein 1 (ORF53).